The sequence spans 463 residues: Phosphomannomutase/phosphoglucomutase (463 aa).

Position 17 (tyrosine 17) interacts with alpha-D-glucose 1-phosphate. Alpha-D-mannose 1-phosphate is bound at residue tyrosine 17. Serine 108 (non-phosphorylated intermediate) is an active-site residue. Positions 108, 242, 244, and 246 each coordinate Mg(2+). Residue serine 108 is modified to Phosphoserine. Alpha-D-glucose 1-phosphate-binding positions include lysine 285, histidine 308, glutamate 325 to histidine 329, and arginine 421 to threonine 425. Residues histidine 308, glutamate 325 to histidine 329, and arginine 421 to threonine 425 each bind alpha-D-mannose 1-phosphate.

This sequence belongs to the phosphohexose mutase family. As to quaternary structure, monomer. Mg(2+) serves as cofactor.

The catalysed reaction is alpha-D-mannose 1-phosphate = D-mannose 6-phosphate. It carries out the reaction alpha-D-glucose 1-phosphate = alpha-D-glucose 6-phosphate. Its pathway is nucleotide-sugar biosynthesis; GDP-alpha-D-mannose biosynthesis; alpha-D-mannose 1-phosphate from D-fructose 6-phosphate: step 2/2. The protein operates within bacterial outer membrane biogenesis; lipopolysaccharide biosynthesis. Its function is as follows. Highly reversible phosphoryltransferase. The phosphomannomutase activity produces a precursor for alginate polymerization, the alginate layer causes a mucoid phenotype and provides a protective barrier against host immune defenses and antibiotics. Also involved in core lipopolysaccaride (LPS) biosynthesis due to its phosphoglucomutase activity. Essential for rhamnolipid production, an exoproduct correlated with pathogenicity. Required for biofilm production. The reaction proceeds via 2 processive phosphoryl transferase reactions; first from enzyme-phospho-Ser-108 to the substrate (generating a bisphosphorylated substrate intermediate and a dephosphorylated enzyme), a 180 degree rotation of the intermediate (probably aided by movement of domain 4), and subsequent transfer of phosphate back to the enzyme. The protein is Phosphomannomutase/phosphoglucomutase (algC) of Pseudomonas aeruginosa (strain UCBPP-PA14).